The primary structure comprises 370 residues: 3-isopropylmalate dehydrogenase (370 aa).

Position 77-90 (Gly77–Glu90) interacts with NAD(+). Substrate is bound by residues Arg97, Arg107, Arg135, and Asp226. Mg(2+) is bound by residues Asp226, Asp250, and Asp254. Gly290–Asn302 provides a ligand contact to NAD(+).

It belongs to the isocitrate and isopropylmalate dehydrogenases family. LeuB type 1 subfamily. In terms of assembly, homodimer. Requires Mg(2+) as cofactor. The cofactor is Mn(2+).

The protein resides in the cytoplasm. It carries out the reaction (2R,3S)-3-isopropylmalate + NAD(+) = 4-methyl-2-oxopentanoate + CO2 + NADH. It functions in the pathway amino-acid biosynthesis; L-leucine biosynthesis; L-leucine from 3-methyl-2-oxobutanoate: step 3/4. Catalyzes the oxidation of 3-carboxy-2-hydroxy-4-methylpentanoate (3-isopropylmalate) to 3-carboxy-4-methyl-2-oxopentanoate. The product decarboxylates to 4-methyl-2 oxopentanoate. In Brucella melitensis biotype 1 (strain ATCC 23456 / CCUG 17765 / NCTC 10094 / 16M), this protein is 3-isopropylmalate dehydrogenase.